The chain runs to 533 residues: Pre-mRNA-splicing factor cwf24 (533 aa).

A compositionally biased stretch (polar residues) spans 1-17 (MEQKNLNINQASGSKIN). Positions 1-69 (MEQKNLNINQ…MRDNIPIVSG (69 aa)) are disordered. The span at 27–43 (SRRRHRPRQGLKRKKGF) shows a compositional bias: basic residues. The C3H1-type zinc-finger motif lies at 184–212 (DYQPDVCKDYKLTGYCGYGDTCKFLHMRE). Residues 254-292 (CLICKKDYRSPIATTCGHHFCEQCAITRYRKTPTCIQCG) form an RING-type zinc finger. Residues 379 to 524 (YFIREITESN…SAFYMVCPLS (146 aa)) enclose the N-acetyltransferase domain.

Belongs to the CWC24 family. As to quaternary structure, belongs to the 40S cdc5-associated complex (or cwf complex), a spliceosome sub-complex reminiscent of a late-stage spliceosome composed of the U2, U5 and U6 snRNAs and at least brr2, cdc5, cwf2/prp3, cwf3/syf1, cwf4/syf3, cwf5/ecm2, spp42/cwf6, cwf7/spf27, cwf8, cwf9, cwf10, cwf11, cwf12, prp45/cwf13, cwf14, cwf15, cwf16, cwf17, cwf18, cwf19, cwf20, cwf21, cwf22, cwf23, cwf24, cwf25, cwf26, cyp7/cwf27, cwf28, cwf29/ist3, lea1, msl1, prp5/cwf1, prp10, prp12/sap130, prp17, prp22, sap61, sap62, sap114, sap145, slu7, smb1, smd1, smd3, smf1, smg1 and syf2.

The protein resides in the nucleus. Functionally, involved in mRNA splicing. This chain is Pre-mRNA-splicing factor cwf24 (cwf24), found in Schizosaccharomyces pombe (strain 972 / ATCC 24843) (Fission yeast).